The following is a 122-amino-acid chain: Protein GL2-INTERACTING REPRESSOR 1 (122 aa).

The segment covering 1-10 (MSRRSPKLEL) has biased composition (basic and acidic residues). The tract at residues 1-62 (MSRRSPKLEL…PSVRYSTSPE (62 aa)) is disordered. Positions 7-12 (KLELKL) match the EAR motif. Over residues 27 to 46 (SPSRSATTSPTSPPSSCVSS) the composition is skewed to low complexity. Positions 47 to 62 (EMNQDEPSVRYSTSPE) are enriched in polar residues.

As to quaternary structure, interacts with GL2. Interacts with TPL. In terms of tissue distribution, expressed in root and shoot meristems.

The protein localises to the nucleus. In terms of biological role, acts as a negative regulator of root hair development redundantly with GIR2. GIR1 and GIR2 may function as adapter proteins that associate with GL2 and participate in the control of root hair formation. GIR1 and GIR2 may function as adapter proteins that associate with TPL and participate in the repression of root gene expression. In Arabidopsis thaliana (Mouse-ear cress), this protein is Protein GL2-INTERACTING REPRESSOR 1.